Consider the following 246-residue polypeptide: ATP synthase subunit a, chloroplastic (246 aa).

5 consecutive transmembrane segments (helical) span residues 35–55 (AQVLITSWIVIGLILGLTFLA), 94–114 (IPFIGTMFLFIFVSNWSGALI), 132–152 (DINTTVALALLTSVAYFYAGL), 198–218 (LVVAVLVSLVPLVVPIPMMFL), and 219–239 (GLFTSAIQALIFATLAAAYIG).

The protein belongs to the ATPase A chain family. In terms of assembly, F-type ATPases have 2 components, CF(1) - the catalytic core - and CF(0) - the membrane proton channel. CF(1) has five subunits: alpha(3), beta(3), gamma(1), delta(1), epsilon(1). CF(0) has four main subunits: a, b, b' and c.

Its subcellular location is the plastid. It is found in the chloroplast thylakoid membrane. In terms of biological role, key component of the proton channel; it plays a direct role in the translocation of protons across the membrane. The chain is ATP synthase subunit a, chloroplastic from Chara vulgaris (Common stonewort).